The primary structure comprises 160 residues: Transcription elongation factor GreA (160 aa).

Residues 1 to 71 (MAEKTYPMTK…GQISTLETQI (71 aa)) adopt a coiled-coil conformation.

Belongs to the GreA/GreB family.

In terms of biological role, necessary for efficient RNA polymerase transcription elongation past template-encoded arresting sites. The arresting sites in DNA have the property of trapping a certain fraction of elongating RNA polymerases that pass through, resulting in locked ternary complexes. Cleavage of the nascent transcript by cleavage factors such as GreA or GreB allows the resumption of elongation from the new 3'terminus. GreA releases sequences of 2 to 3 nucleotides. This Streptococcus uberis (strain ATCC BAA-854 / 0140J) protein is Transcription elongation factor GreA.